Reading from the N-terminus, the 90-residue chain is FMRFamide-like neuropeptides 27 (90 aa).

The signal sequence occupies residues 1-24 (MFSFRKFLAFMLIVIALMASFSSA). Positions 25–36 (QPIDEERPIFME) are excised as a propeptide. Phe61 carries the post-translational modification Phenylalanine amide. A propeptide spanning residues 65–90 (SSSPSDISMAELRAIYGGGPVEYVQL) is cleaved from the precursor.

It belongs to the FARP (FMRFamide related peptide) family.

It is found in the secreted. Functionally, FMRFamides and FMRFamide-like peptides are neuropeptides. The chain is FMRFamide-like neuropeptides 27 from Caenorhabditis briggsae.